Here is a 444-residue protein sequence, read N- to C-terminus: Multidrug resistance protein MdtA (444 aa).

The N-terminal stretch at 1 to 20 (MKSQSKRTSRLFVFVGGVVA) is a signal peptide. A compositionally biased stretch (polar residues) spans 37 to 52 (NNTSGAQQSARGQDTS). Disordered stretches follow at residues 37–60 (NNTS…RNTP) and 398–444 (TPRS…AEKS). A compositionally biased stretch (low complexity) spans 406 to 419 (ANPASAEKAAAEAE). Positions 435 to 444 (ARSTTAAEKS) are enriched in polar residues.

This sequence belongs to the membrane fusion protein (MFP) (TC 8.A.1) family. As to quaternary structure, part of a tripartite efflux system composed of MdtA, MdtB and MdtC.

It is found in the cell inner membrane. The sequence is that of Multidrug resistance protein MdtA from Yersinia pseudotuberculosis serotype O:1b (strain IP 31758).